A 207-amino-acid chain; its full sequence is Ribosomal RNA small subunit methyltransferase G (207 aa).

S-adenosyl-L-methionine-binding positions include Gly-73, Leu-78, 124-125 (VE), and Arg-139.

Belongs to the methyltransferase superfamily. RNA methyltransferase RsmG family.

It localises to the cytoplasm. It carries out the reaction guanosine(527) in 16S rRNA + S-adenosyl-L-methionine = N(7)-methylguanosine(527) in 16S rRNA + S-adenosyl-L-homocysteine. Its function is as follows. Specifically methylates the N7 position of guanine in position 527 of 16S rRNA. This Klebsiella pneumoniae subsp. pneumoniae (strain ATCC 700721 / MGH 78578) protein is Ribosomal RNA small subunit methyltransferase G.